A 152-amino-acid chain; its full sequence is 1,4-dihydroxy-2-naphthoyl-CoA hydrolase (152 aa).

The active site involves Asp-20.

It belongs to the 4-hydroxybenzoyl-CoA thioesterase family. DHNA-CoA hydrolase subfamily.

It catalyses the reaction 1,4-dihydroxy-2-naphthoyl-CoA + H2O = 1,4-dihydroxy-2-naphthoate + CoA + H(+). It functions in the pathway cofactor biosynthesis; phylloquinone biosynthesis. It participates in quinol/quinone metabolism; 1,4-dihydroxy-2-naphthoate biosynthesis; 1,4-dihydroxy-2-naphthoate from chorismate: step 7/7. Catalyzes the hydrolysis of 1,4-dihydroxy-2-naphthoyl-CoA (DHNA-CoA) to 1,4-dihydroxy-2-naphthoate (DHNA), a reaction involved in phylloquinone (vitamin K1) biosynthesis. The sequence is that of 1,4-dihydroxy-2-naphthoyl-CoA hydrolase from Synechococcus sp. (strain CC9311).